Here is a 693-residue protein sequence, read N- to C-terminus: DNA ligase (693 aa).

NAD(+) contacts are provided by residues 35-39, 84-85, and glutamate 121; these read DAEYD and SI. Lysine 123 serves as the catalytic N6-AMP-lysine intermediate. Residues arginine 144, glutamate 180, lysine 297, and lysine 321 each coordinate NAD(+). Zn(2+) contacts are provided by cysteine 418, cysteine 421, cysteine 436, and cysteine 442. A BRCT domain is found at 601-690; sequence PASGSVAGLT…EQSPINNKDG (90 aa).

It belongs to the NAD-dependent DNA ligase family. LigA subfamily. It depends on Mg(2+) as a cofactor. Requires Mn(2+) as cofactor.

The enzyme catalyses NAD(+) + (deoxyribonucleotide)n-3'-hydroxyl + 5'-phospho-(deoxyribonucleotide)m = (deoxyribonucleotide)n+m + AMP + beta-nicotinamide D-nucleotide.. In terms of biological role, DNA ligase that catalyzes the formation of phosphodiester linkages between 5'-phosphoryl and 3'-hydroxyl groups in double-stranded DNA using NAD as a coenzyme and as the energy source for the reaction. It is essential for DNA replication and repair of damaged DNA. The chain is DNA ligase from Azoarcus sp. (strain BH72).